We begin with the raw amino-acid sequence, 489 residues long: Ribulose bisphosphate carboxylase large chain (489 aa).

Asparagine 128 and threonine 178 together coordinate substrate. Lysine 180 (proton acceptor) is an active-site residue. Lysine 182 provides a ligand contact to substrate. Lysine 206, aspartate 208, and glutamate 209 together coordinate Mg(2+). At lysine 206 the chain carries N6-carboxylysine. Histidine 298 serves as the catalytic Proton acceptor. Arginine 299, histidine 331, and serine 383 together coordinate substrate.

Belongs to the RuBisCO large chain family. Type I subfamily. As to quaternary structure, heterohexadecamer of 8 large chains and 8 small chains. Mg(2+) is required as a cofactor.

The catalysed reaction is 2 (2R)-3-phosphoglycerate + 2 H(+) = D-ribulose 1,5-bisphosphate + CO2 + H2O. It carries out the reaction D-ribulose 1,5-bisphosphate + O2 = 2-phosphoglycolate + (2R)-3-phosphoglycerate + 2 H(+). In terms of biological role, ruBisCO catalyzes two reactions: the carboxylation of D-ribulose 1,5-bisphosphate, the primary event in carbon dioxide fixation, as well as the oxidative fragmentation of the pentose substrate. Both reactions occur simultaneously and in competition at the same active site. This chain is Ribulose bisphosphate carboxylase large chain, found in Nitrosospira sp. (strain 40KI).